The following is a 253-amino-acid chain: MKILVAVKRVVDYAVKVRVRPDRTGVETASVKMSMNPFCEIAVEEALRLREAGAATEVVAATVGPSQSADTLRTALAMGADRAVHVLHDPDPSRPLLPLAVAKILRALALQENPGLVILGKQAIDDDCNQTGQMLAGLLNWPQGTFASKVILNKEKATVEREVDGGIETISLDLPAVITTDLRLNQPRYATLPNIMKAKSKVIKKVTPEDLDVDIRSDMEVVEVTEPPKRKAGVILSSVDELIDRLKNEARVL.

This sequence belongs to the ETF beta-subunit/FixA family. Heterodimer of an alpha and a beta subunit. FAD is required as a cofactor. AMP serves as cofactor.

The protein resides in the mitochondrion matrix. Its function is as follows. The electron transfer flavoprotein serves as a specific electron acceptor for several dehydrogenases, including five acyl-CoA dehydrogenases, glutaryl-CoA and sarcosine dehydrogenase. It transfers the electrons to the main mitochondrial respiratory chain via ETF-ubiquinone oxidoreductase (ETF dehydrogenase). This Oryza sativa subsp. indica (Rice) protein is Electron transfer flavoprotein subunit beta, mitochondrial (ETFB).